The following is a 156-amino-acid chain: Cyanate hydratase (156 aa).

Residues Arg-96, Glu-99, and Ser-122 contribute to the active site.

It belongs to the cyanase family.

The enzyme catalyses cyanate + hydrogencarbonate + 3 H(+) = NH4(+) + 2 CO2. Catalyzes the reaction of cyanate with bicarbonate to produce ammonia and carbon dioxide. This Burkholderia orbicola (strain MC0-3) protein is Cyanate hydratase.